A 363-amino-acid polypeptide reads, in one-letter code: Aminomethyltransferase (363 aa).

It belongs to the GcvT family. The glycine cleavage system is composed of four proteins: P, T, L and H.

It catalyses the reaction N(6)-[(R)-S(8)-aminomethyldihydrolipoyl]-L-lysyl-[protein] + (6S)-5,6,7,8-tetrahydrofolate = N(6)-[(R)-dihydrolipoyl]-L-lysyl-[protein] + (6R)-5,10-methylene-5,6,7,8-tetrahydrofolate + NH4(+). The glycine cleavage system catalyzes the degradation of glycine. This is Aminomethyltransferase from Prosthecochloris aestuarii (strain DSM 271 / SK 413).